A 91-amino-acid chain; its full sequence is Large ribosomal subunit protein eL31 (91 aa).

The protein belongs to the eukaryotic ribosomal protein eL31 family.

The polypeptide is Large ribosomal subunit protein eL31 (Pyrobaculum neutrophilum (strain DSM 2338 / JCM 9278 / NBRC 100436 / V24Sta) (Thermoproteus neutrophilus)).